Here is a 1165-residue protein sequence, read N- to C-terminus: MFQIPVQNLDNIRKVRKRVKGILVDIGLDSCKELMKDLKSFDPGEKYFYNTSWGDVSPWEPSGKKARYRTKPYCCSLCRYSTKVLTSLKNHLHRYHEDEADQELMIPCPNCPFSSQPRVVGKHFRMFHAPARKVQSYTVNILGETKTSRSDVISFTCLKCNFSNTLYYSMKKHVLVAHFNYLINSYFGLRTEETGEQPKASDPVSVDKILPFDKYYCKKCSAIASSQDALMYHILTSDAHRDLENKLRSVISEHIKRTGFLKQMHIAPKPVTHLALPPNSSAPSIAAPPPCFQLALPQNSQSSGTVQSVTVTPGTSGSLTHSPPTTAQSHVALVSSSLPVCQSSLSLQQSAPPPVFLSHSVALNQPVNTAVLPLTQPVGPVNKSVGTSILPVNQAMCSVNQAVRPGLLPLTKPMGPMNRPVGPAVLPMGPSVNSGVLQATSPGVISVGRAVPSGVLPAGQVTPAGVIPGQTATSGVLPTGQVVQSSTLPVGQTAPSRGLPPGQTVPLRVLPAGQVVPSGLLSSNQTVPSGVVPVNQGVNSGVLQLGQPVTPGVLPVGPPVRPGVLQLSPSVSTSILPMSQPVRAGTSQNTTFFTSGSILRQLIPTGKQVNGIPTYTLAPVSVTLPVPSGGGLAAVGPPPQVPVQFLPSGSGTQMGSSLPSLPSPQVLVSPAPSVFVQATPPLADANQALKQAKQWKTCPVCNELFPSNVYQVHMEVAHKQSEAQLCQVCNELFPANVYQVHMEVAHKQSESKSSEKLEPEKLAACAPFLKWMREKTVRCLSCKCLVSQEELMHHLLMHGLGCLFCPCTFHDVRGLVEHSRTKHLGKKRLSMDYSNRGFQLDLDANGNLLFPHLDFITILPREKLGEREVYLAILAGIHSKSLVPVYVKVRPQPEVAPKIPNKQKLTCPFCLSTFMTADAYELHLKERHHVMPTVHTMLRSPAFKCIHCCGVYTGNMTLGAIAVHLLRCRSAPKDSSSDLQVQPGFIESSELLMVNGDVIPESTFPVKRKLPEGHLGPEDQRDGEEPQLTLDADASSGSEKGLGAVPLKRQKSEIRTEGSGPSEDSLQALALDPSKYEGRSYEEKKQFLRDYFHRRPYPSRKEVELLSSLLWVWKIDVASFFGKRRYICMKAIKTHKPSVLLGFDMSELKNVKHRLNFGECESQKL.

Residues 73-96 form a C2H2-type 1 zinc finger; that stretch reads YCCSLCRYSTKVLTSLKNHLHRYH. The C2H2-type 2; degenerate zinc finger occupies 106 to 128; the sequence is IPCPNCPFSSQPRVVGKHFRMFH. Lys146 participates in a covalent cross-link: Glycyl lysine isopeptide (Lys-Gly) (interchain with G-Cter in SUMO2). The C2H2-type 3; degenerate zinc-finger motif lies at 155-178; it reads FTCLKCNFSNTLYYSMKKHVLVAH. The C2H2-type 4 zinc finger occupies 215-240; that stretch reads YYCKKCSAIASSQDALMYHILTSDAH. Over residues 303-318 the composition is skewed to low complexity; the sequence is SGTVQSVTVTPGTSGS. Residues 303–327 are disordered; that stretch reads SGTVQSVTVTPGTSGSLTHSPPTTA. The C2H2-type 5; degenerate zinc-finger motif lies at 696–718; the sequence is KTCPVCNELFPSNVYQVHMEVAH. The C2H2-type 6; degenerate zinc finger occupies 724–746; sequence QLCQVCNELFPANVYQVHMEVAH. The segment at 777–798 adopts a C2H2-type 7; degenerate zinc-finger fold; it reads VRCLSCKCLVSQEELMHHLLMH. C2H2-type zinc fingers lie at residues 800-823 and 905-935; these read LGCL…RTKH and LTCP…PTVH. Residues 1005–1068 are disordered; it reads PVKRKLPEGH…SGPSEDSLQA (64 aa). Glycyl lysine isopeptide (Lys-Gly) (interchain with G-Cter in SUMO2) cross-links involve residues Lys1009 and Lys1048. Residues 1009 to 1024 show a composition bias toward basic and acidic residues; the sequence is KLPEGHLGPEDQRDGE. Positions 1090–1132 form a DNA-binding region, homeobox; sequence DYFHRRPYPSRKEVELLSSLLWVWKIDVASFFGKRRYICMKAI.

It belongs to the krueppel C2H2-type zinc-finger protein family. In terms of assembly, may interact with SMARCA4/BRG1. As to expression, expressed widely, with the highest level in the brain.

The protein resides in the nucleus. May be involved in transcriptional regulation. May play a role in neuronal function; perhaps involved in protection of brain tissues from oxidative stress. May be involved in erythroid differentiation. The protein is Activity-dependent neuroprotector homeobox protein 2 (Adnp2) of Mus musculus (Mouse).